The primary structure comprises 591 residues: Guanylate-binding protein 2 (591 aa).

The interval methionine 1–cysteine 309 is GTPase domain (Globular). Residues threonine 35–asparagine 276 enclose the GB1/RHD3-type G domain. Residues glycine 45–serine 52, arginine 181–aspartate 182, and leucine 245 each bind GTP. Cysteine methyl ester is present on cysteine 588. Cysteine 588 carries S-geranylgeranyl cysteine lipidation. The propeptide at asparagine 589–leucine 591 is removed in mature form.

Belongs to the TRAFAC class dynamin-like GTPase superfamily. GB1/RHD3 GTPase family. GB1 subfamily. Homodimer; homodimerization occurs upon GTP-binding and is required for the association with membranous structures. Heterodimer with other family members, including GBP1, GBP3, GBP4 and GBP5. Post-translationally, (Microbial infection) Ubiquitinated by S.flexneri IpaH9.8, leading to its degradation by the proteasome, thereby preventing its ability to promote host defense against bacterial infection. In terms of processing, isoprenylation is required for proper subcellular location.

The protein localises to the cytoplasmic vesicle membrane. It is found in the golgi apparatus membrane. It localises to the cytoplasm. The protein resides in the perinuclear region. It catalyses the reaction GTP + H2O = GDP + phosphate + H(+). Functionally, interferon (IFN)-inducible GTPase that plays important roles in innate immunity against a diverse range of bacterial, viral and protozoan pathogens. Hydrolyzes GTP to GMP in 2 consecutive cleavage reactions, but the major reaction product is GDP. Following infection, recruited to the pathogen-containing vacuoles or vacuole-escaped bacteria and acts as a positive regulator of inflammasome assembly by promoting the release of inflammasome ligands from bacteria. Acts by promoting lysis of pathogen-containing vacuoles, releasing pathogens into the cytosol. Following pathogen release in the cytosol, promotes recruitment of proteins that mediate bacterial cytolysis: this liberates ligands that are detected by inflammasomes, such as lipopolysaccharide (LPS) that activates the non-canonical CASP4/CASP11 inflammasome or double-stranded DNA (dsDNA) that activates the AIM2 inflammasome. Confers protection to the protozoan pathogen Toxoplasma gondii. Independently of its GTPase activity, acts as an inhibitor of various viruses infectivity, such as HIV-1, Zika and influenza A viruses, by inhibiting FURIN-mediated maturation of viral envelope proteins. The sequence is that of Guanylate-binding protein 2 from Homo sapiens (Human).